Consider the following 320-residue polypeptide: uncharacterized protein (320 aa).

Residues 13 to 132 (ALVLKSLLRE…VLYPEIPSPE (120 aa)) form the Arf-GAP domain. The C4-type zinc-finger motif lies at 28 to 52 (CADCKRNEQPRWASWNLGVFICIRC). Disordered stretches follow at residues 153 to 212 (NTAS…STRQ), 227 to 261 (RPQVSSSSITTNATYQNLPSPVSTSTTSSQPYGAF), and 284 to 320 (NVTSAQPSARASPVQSNSSRPRSSLDSKIINSHDVWK). The span at 154–176 (TASRSSSAHSVKSTSSATVTNVT) shows a compositional bias: low complexity. Composition is skewed to polar residues over residues 183 to 210 (SATTSLAQSSPNLASLSKQPSTVHAPST) and 228 to 244 (PQVSSSSITTNATYQNL). 2 stretches are compositionally biased toward low complexity: residues 245–257 (PSPVSTSTTSSQP) and 295–310 (SPVQSNSSRPRSSLDS).

Its subcellular location is the cytoplasm. It localises to the golgi apparatus. In terms of biological role, GTPase-activating protein for the ADP ribosylation factor family. This is an uncharacterized protein from Schizosaccharomyces pombe (strain 972 / ATCC 24843) (Fission yeast).